The chain runs to 49 residues: Protein OPG059 (49 aa).

Residue Met-1 is a topological domain, virion surface. The chain crosses the membrane as a helical span at residues 2 to 22; that stretch reads VIGLVIFVSVAATIVGVLSNV. Topologically, residues 23 to 49 are intravirion; the sequence is LDMIMYVEENNEEDAKIKEEQELLLLY.

This sequence belongs to the orthopoxvirus OPG059 family.

The protein localises to the virion membrane. It is found in the host membrane. Functionally, may play a role in cell adhesion and is important for virus virulence in vivo, although it is not required for the virus life cycle in cell cultures. The sequence is that of Protein OPG059 (OPG059) from Cynomys gunnisoni (Gunnison's prairie dog).